The chain runs to 242 residues: Type III pantothenate kinase (242 aa).

6-13 (DAGNTRLK) contacts ATP. Substrate contacts are provided by residues Tyr-90 and 97-100 (GADR). Asp-99 serves as the catalytic Proton acceptor. Asp-119 contributes to the K(+) binding site. Ser-122 is a binding site for ATP. Thr-174 contributes to the substrate binding site.

This sequence belongs to the type III pantothenate kinase family. As to quaternary structure, homodimer. NH4(+) serves as cofactor. It depends on K(+) as a cofactor.

Its subcellular location is the cytoplasm. It carries out the reaction (R)-pantothenate + ATP = (R)-4'-phosphopantothenate + ADP + H(+). It participates in cofactor biosynthesis; coenzyme A biosynthesis; CoA from (R)-pantothenate: step 1/5. Its function is as follows. Catalyzes the phosphorylation of pantothenate (Pan), the first step in CoA biosynthesis. The chain is Type III pantothenate kinase from Marinobacter nauticus (strain ATCC 700491 / DSM 11845 / VT8) (Marinobacter aquaeolei).